The primary structure comprises 354 residues: Uroporphyrinogen decarboxylase (354 aa).

Substrate-binding positions include 30-34, D79, Y154, S209, and H333; that span reads RQAGR.

Belongs to the uroporphyrinogen decarboxylase family. As to quaternary structure, homodimer.

Its subcellular location is the cytoplasm. The catalysed reaction is uroporphyrinogen III + 4 H(+) = coproporphyrinogen III + 4 CO2. The protein operates within porphyrin-containing compound metabolism; protoporphyrin-IX biosynthesis; coproporphyrinogen-III from 5-aminolevulinate: step 4/4. Functionally, catalyzes the decarboxylation of four acetate groups of uroporphyrinogen-III to yield coproporphyrinogen-III. In Mycobacterium sp. (strain JLS), this protein is Uroporphyrinogen decarboxylase.